Reading from the N-terminus, the 335-residue chain is Glyceraldehyde-3-phosphate dehydrogenase 1 (335 aa).

Residues 13 to 14 and G111 each bind NAD(+); that span reads TI. Position 140 to 142 (140 to 142) interacts with D-glyceraldehyde 3-phosphate; sequence SCN. C141 serves as the catalytic Nucleophile. R169 is a binding site for NAD(+). Residues T171 and 195 to 196 contribute to the D-glyceraldehyde 3-phosphate site; that span reads HG. Q300 is an NAD(+) binding site.

This sequence belongs to the glyceraldehyde-3-phosphate dehydrogenase family. In terms of assembly, homotetramer.

The protein resides in the cytoplasm. The enzyme catalyses D-glyceraldehyde 3-phosphate + phosphate + NADP(+) = (2R)-3-phospho-glyceroyl phosphate + NADPH + H(+). It carries out the reaction D-glyceraldehyde 3-phosphate + phosphate + NAD(+) = (2R)-3-phospho-glyceroyl phosphate + NADH + H(+). Its pathway is carbohydrate degradation; glycolysis; pyruvate from D-glyceraldehyde 3-phosphate: step 1/5. This is Glyceraldehyde-3-phosphate dehydrogenase 1 (gapA) from Methanosarcina acetivorans (strain ATCC 35395 / DSM 2834 / JCM 12185 / C2A).